Reading from the N-terminus, the 264-residue chain is Thymidylate synthase (264 aa).

Arginine 21 lines the dUMP pocket. A (6R)-5,10-methylene-5,6,7,8-tetrahydrofolate-binding site is contributed by histidine 51. DUMP is bound at residue 126–127 (RR). Catalysis depends on cysteine 146, which acts as the Nucleophile. Residues 166–169 (RSAD), asparagine 177, and 207–209 (HLY) each bind dUMP. Position 169 (aspartate 169) interacts with (6R)-5,10-methylene-5,6,7,8-tetrahydrofolate. (6R)-5,10-methylene-5,6,7,8-tetrahydrofolate is bound at residue serine 263.

Belongs to the thymidylate synthase family. Bacterial-type ThyA subfamily. Homodimer.

The protein resides in the cytoplasm. The enzyme catalyses dUMP + (6R)-5,10-methylene-5,6,7,8-tetrahydrofolate = 7,8-dihydrofolate + dTMP. Its pathway is pyrimidine metabolism; dTTP biosynthesis. Catalyzes the reductive methylation of 2'-deoxyuridine-5'-monophosphate (dUMP) to 2'-deoxythymidine-5'-monophosphate (dTMP) while utilizing 5,10-methylenetetrahydrofolate (mTHF) as the methyl donor and reductant in the reaction, yielding dihydrofolate (DHF) as a by-product. This enzymatic reaction provides an intracellular de novo source of dTMP, an essential precursor for DNA biosynthesis. The sequence is that of Thymidylate synthase from Shouchella clausii (strain KSM-K16) (Alkalihalobacillus clausii).